The primary structure comprises 245 residues: 1-(5-phosphoribosyl)-5-[(5-phosphoribosylamino)methylideneamino] imidazole-4-carboxamide isomerase (245 aa).

The Proton acceptor role is filled by Asp-8. Residue Asp-130 is the Proton donor of the active site.

This sequence belongs to the HisA/HisF family.

Its subcellular location is the cytoplasm. It carries out the reaction 1-(5-phospho-beta-D-ribosyl)-5-[(5-phospho-beta-D-ribosylamino)methylideneamino]imidazole-4-carboxamide = 5-[(5-phospho-1-deoxy-D-ribulos-1-ylimino)methylamino]-1-(5-phospho-beta-D-ribosyl)imidazole-4-carboxamide. The protein operates within amino-acid biosynthesis; L-histidine biosynthesis; L-histidine from 5-phospho-alpha-D-ribose 1-diphosphate: step 4/9. The protein is 1-(5-phosphoribosyl)-5-[(5-phosphoribosylamino)methylideneamino] imidazole-4-carboxamide isomerase of Pseudomonas putida (strain ATCC 700007 / DSM 6899 / JCM 31910 / BCRC 17059 / LMG 24140 / F1).